A 716-amino-acid polypeptide reads, in one-letter code: Leucine-rich repeat neuronal protein 1 (716 aa).

An N-terminal signal peptide occupies residues 1 to 25 (MARMSFVLAAYQMVLSLLMTSLTGS). An LRRNT domain is found at 26–72 (SLQSSECPQLCVCEIRPWFTPQSTYREATTVDCNDLRLTRIPSNLSS). The Extracellular segment spans residues 26-631 (SLQSSECPQL…DISDQETSTA (606 aa)). The N-linked (GlcNAc...) asparagine glycan is linked to Asn69. LRR repeat units follow at residues 73–95 (DTQV…QQLF), 96–117 (NLTE…GLAN), 120–141 (QLTT…CLQD), 144–165 (NLQE…AFSG), 168–189 (NLLR…WFDS), 192–213 (NLEI…NFKP), 216–237 (NLRS…ALVG), 240–261 (SLES…ALQK), and 264–285 (NLKF…DFKN). N-linked (GlcNAc...) asparagine glycans are attached at residues Asn96, Asn106, and Asn117. The LRRCT domain maps to 371-424 (NPLRCDCVIHWINSNKTNIRFMEPLSMFCAMPPEYRGQQVKEVLIQDSSEQCLP). A glycan (N-linked (GlcNAc...) asparagine) is linked at Asn385. One can recognise an Ig-like C2-type domain in the interval 424 to 515 (PMISHDTFPN…GADTRVVMIK (92 aa)). An intrachain disulfide couples Cys447 to Cys499. Asn517, Asn582, and Asn611 each carry an N-linked (GlcNAc...) asparagine glycan. Residues 525-617 (QVLKIYVKQT…SCVNVTTKNA (93 aa)) enclose the Fibronectin type-III domain. The chain crosses the membrane as a helical span at residues 632 to 652 (LAAVMGSMFAVISLASIAVYI). The Cytoplasmic segment spans residues 653–716 (AKRFKRKNYH…VDTSRSYYMW (64 aa)). Positions 691–700 (DSEKDKDGTA) are enriched in basic and acidic residues. Residues 691-716 (DSEKDKDGTADTKPTQVDTSRSYYMW) form a disordered region. Over residues 702–716 (TKPTQVDTSRSYYMW) the composition is skewed to polar residues.

The protein localises to the membrane. This chain is Leucine-rich repeat neuronal protein 1 (LRRN1), found in Bos taurus (Bovine).